Consider the following 731-residue polypeptide: E3 ubiquitin-protein ligase SMURF1 (731 aa).

One can recognise a C2 domain in the interval 1–120; that stretch reads MSNPGTRRNG…TGYQRLDLCK (120 aa). Phosphoserine is present on Ser-200. Residues 216-237 are disordered; that stretch reads EVRGPLQTPQNRPHGHQSPELP. 2 consecutive WW domains span residues 234-267 and 280-313; these read PELPEGYEQRTTVQGQVYFLHTQTGVSTWHDPRI and GPLPPGWEVRSTVSGRIYFVDHNNRTTQFTDPRL. Glycyl lysine isopeptide (Lys-Gly) (interchain with G-Cter in ubiquitin) cross-links involve residues Lys-355 and Lys-357. The HECT domain occupies 394–731; that stretch reads RPKDLKKRLM…VEETCGFAVE (338 aa). Residue Cys-699 is the Glycyl thioester intermediate of the active site.

As to quaternary structure, interacts with TRAF4. Interacts (via HECT domain) with FBXL15 (via LRR repeats). Interacts with SMAD7 and TGFBR1; SMAD7 recruits SMURF1 to TGFBR1 and regulates TGF-beta receptor degradation. Interacts with MAVS; the interaction is mediated by NDFIP1. Auto-ubiquitinated in presence of NDFIP1. Ubiquitinated by the SCF(FBXL15) complex at Lys-355 and Lys-357, leading to its degradation by the proteasome. Lys-357 is the primary ubiquitination site.

Its subcellular location is the cytoplasm. The protein resides in the cell membrane. The catalysed reaction is S-ubiquitinyl-[E2 ubiquitin-conjugating enzyme]-L-cysteine + [acceptor protein]-L-lysine = [E2 ubiquitin-conjugating enzyme]-L-cysteine + N(6)-ubiquitinyl-[acceptor protein]-L-lysine.. Its pathway is protein modification; protein ubiquitination. Functionally, E3 ubiquitin-protein ligase that acts as a negative regulator of BMP signaling pathway. Mediates ubiquitination and degradation of SMAD1 and SMAD5, 2 receptor-regulated SMADs specific for the BMP pathway. Promotes ubiquitination and subsequent proteasomal degradation of TRAF family members and RHOA. Promotes ubiquitination and subsequent proteasomal degradation of MAVS. Acts as an antagonist of TGF-beta signaling by ubiquitinating TGFBR1 and targeting it for degradation. Plays a role in dendrite formation by melanocytes. This chain is E3 ubiquitin-protein ligase SMURF1 (Smurf1), found in Mus musculus (Mouse).